The chain runs to 159 residues: MKVAVYPGSFDPITNGHLDIIERGSKVFDKLIIGVLVNVDKKGLFEIEERVELIKKVTKHIKNVEVISFNGLLIDFLKAYNAKIILKGLRAVSDFEYEFKMALMNNKLDPDIETVFMMTSAQYSYLSSSSVKQVAKFGGCIEGLVPKEIISDVVRRSKI.

Residue S9 participates in substrate binding. ATP-binding positions include 9–10 (SF) and H17. Substrate-binding residues include K41, L73, and K87. Residues 88–90 (GLR), E98, and 123–129 (YSYLSSS) each bind ATP.

This sequence belongs to the bacterial CoaD family. In terms of assembly, homohexamer. Mg(2+) is required as a cofactor.

The protein resides in the cytoplasm. It catalyses the reaction (R)-4'-phosphopantetheine + ATP + H(+) = 3'-dephospho-CoA + diphosphate. Its pathway is cofactor biosynthesis; coenzyme A biosynthesis; CoA from (R)-pantothenate: step 4/5. Its function is as follows. Reversibly transfers an adenylyl group from ATP to 4'-phosphopantetheine, yielding dephospho-CoA (dPCoA) and pyrophosphate. The polypeptide is Phosphopantetheine adenylyltransferase (Clostridium botulinum (strain Alaska E43 / Type E3)).